Consider the following 122-residue polypeptide: Large ribosomal subunit protein bL12 (122 aa).

It belongs to the bacterial ribosomal protein bL12 family. In terms of assembly, homodimer. Part of the ribosomal stalk of the 50S ribosomal subunit. Forms a multimeric L10(L12)X complex, where L10 forms an elongated spine to which 2 to 4 L12 dimers bind in a sequential fashion. Binds GTP-bound translation factors.

Functionally, forms part of the ribosomal stalk which helps the ribosome interact with GTP-bound translation factors. Is thus essential for accurate translation. In Mycoplasma pneumoniae (strain ATCC 29342 / M129 / Subtype 1) (Mycoplasmoides pneumoniae), this protein is Large ribosomal subunit protein bL12.